We begin with the raw amino-acid sequence, 156 residues long: Endogenous retrovirus group K member 9 Pro protein (156 aa).

The Peptidase A2 domain occupies 21 to 96 (FEGLVDTGAD…IPLNLWGRDL (76 aa)). Aspartate 26 is a catalytic residue. The region spanning 111–156 (YSPTSQKIMTKRGYIPGKGLGKNEDGIKIPFEAKINQKREGIGYPF) is the G-patch domain.

This sequence belongs to the peptidase A2 family. HERV class-II K(HML-2) subfamily. Active as a homodimer. In terms of processing, autoproteolytically processed at the N-terminus. Expected C-terminal autoprocessing not detected. The sequence shown is that of the processed Pro protein.

The catalysed reaction is Processing at the authentic HIV-1 PR recognition site and release of the mature p17 matrix and the p24 capsid protein, as a result of the cleavage of the -SQNY-|-PIVQ- cleavage site.. In terms of biological role, retroviral proteases have roles in the processing of the primary translation products and the maturation of the viral particle. Endogenous Pro proteins may have kept, lost or modified their original function during evolution. The chain is Endogenous retrovirus group K member 9 Pro protein (ERVK-9) from Homo sapiens (Human).